Consider the following 197-residue polypeptide: dITP/XTP pyrophosphatase (197 aa).

Residue 9-14 coordinates substrate; it reads TNNLNK. Glu-42 and Asp-71 together coordinate Mg(2+). The active-site Proton acceptor is Asp-71. Substrate-binding positions include Ser-72, 153–156, Lys-176, and 181–182; these read FGYD and HR.

Belongs to the HAM1 NTPase family. Homodimer. Mg(2+) serves as cofactor.

It catalyses the reaction XTP + H2O = XMP + diphosphate + H(+). It carries out the reaction dITP + H2O = dIMP + diphosphate + H(+). The catalysed reaction is ITP + H2O = IMP + diphosphate + H(+). Pyrophosphatase that catalyzes the hydrolysis of nucleoside triphosphates to their monophosphate derivatives, with a high preference for the non-canonical purine nucleotides XTP (xanthosine triphosphate), dITP (deoxyinosine triphosphate) and ITP. Seems to function as a house-cleaning enzyme that removes non-canonical purine nucleotides from the nucleotide pool, thus preventing their incorporation into DNA/RNA and avoiding chromosomal lesions. In Leptospira interrogans serogroup Icterohaemorrhagiae serovar copenhageni (strain Fiocruz L1-130), this protein is dITP/XTP pyrophosphatase.